Here is an 866-residue protein sequence, read N- to C-terminus: Glycoprotein gp2 (866 aa).

The first 25 residues, 1-25 (MGFIYARKLLLCMAVSIYAIGSTTT), serve as a signal peptide directing secretion. 2 disordered regions span residues 24-185 (TTTE…TDTT) and 319-619 (TAAT…IVPQ). N48 is a glycosylation site (N-linked (GlcNAc...) asparagine; by host). A compositionally biased stretch (low complexity) spans 319 to 442 (TAATTTAATT…PDSSTGSTST (124 aa)). A compositionally biased stretch (polar residues) spans 443-463 (AEPSSTFTLTPSTATPSTDQF). Composition is skewed to low complexity over residues 464–499 (TGSS…EAST) and 514–526 (TPDG…NTTP). Residue N518 is glycosylated (N-linked (GlcNAc...) asparagine; by host). Polar residues predominate over residues 535 to 561 (FADTQQTPDNGVSTQHTTINDHTTANA). The segment covering 564–574 (HAGHHRGRAGG) has biased composition (basic residues). N-linked (GlcNAc...) asparagine; by host glycosylation is found at N611 and N659. Residues 835 to 855 (FALVAATTLTVTILCLLCCLY) traverse the membrane as a helical segment.

The protein resides in the virion membrane. Functionally, virulence factor. This chain is Glycoprotein gp2, found in Equus caballus (Horse).